The following is a 435-amino-acid chain: UPF0053 protein Rv2366c (435 aa).

The region spanning methionine 1 to glutamate 185 is the CNNM transmembrane domain. Helical transmembrane passes span leucine 7–isoleucine 27 and valine 89–valine 109. CBS domains follow at residues methionine 204–threonine 267 and valine 272–glutamate 329.

Belongs to the UPF0053 family.

It is found in the cell membrane. This Mycobacterium tuberculosis (strain ATCC 25618 / H37Rv) protein is UPF0053 protein Rv2366c.